The sequence spans 911 residues: Nitrate reductase [NADH], clone PBNBR1405 (911 aa).

Residues 1–68 (MATSVDNRHY…RFDSSDDEDE (68 aa)) form a disordered region. Positions 49–62 (KSVDKTTKEDRFDS) are enriched in basic and acidic residues. Cys-191 is a binding site for Mo-molybdopterin. Residues 539 to 614 (SKMYSMSEVR…LEDYRIGELI (76 aa)) form the Cytochrome b5 heme-binding domain. 2 residues coordinate heme: His-574 and His-597. An FAD-binding FR-type domain is found at 654 to 766 (REKVPVKLIE…KGPLGHIEYQ (113 aa)). Residues 706-709 (RAYT), 723-727 (VIKVY), Phe-728, Phe-735, 740-742 (LMS), and Thr-793 contribute to the FAD site.

Belongs to the nitrate reductase family. Homodimer. FAD serves as cofactor. The cofactor is heme. Mo-molybdopterin is required as a cofactor.

The catalysed reaction is nitrite + NAD(+) + H2O = nitrate + NADH + H(+). In terms of biological role, nitrate reductase is a key enzyme involved in the first step of nitrate assimilation in plants, fungi and bacteria. This Brassica napus (Rape) protein is Nitrate reductase [NADH], clone PBNBR1405 (NIA1).